We begin with the raw amino-acid sequence, 361 residues long: Nicotinate-nucleotide--dimethylbenzimidazole phosphoribosyltransferase (361 aa).

Catalysis depends on E320, which acts as the Proton acceptor.

Belongs to the CobT family. Homodimer.

It carries out the reaction 5,6-dimethylbenzimidazole + nicotinate beta-D-ribonucleotide = alpha-ribazole 5'-phosphate + nicotinate + H(+). Its pathway is nucleoside biosynthesis; alpha-ribazole biosynthesis; alpha-ribazole from 5,6-dimethylbenzimidazole: step 1/2. Its function is as follows. Catalyzes the synthesis of alpha-ribazole-5'-phosphate from nicotinate mononucleotide (NAMN) and 5,6-dimethylbenzimidazole (DMB). The protein is Nicotinate-nucleotide--dimethylbenzimidazole phosphoribosyltransferase of Shigella boydii serotype 18 (strain CDC 3083-94 / BS512).